A 208-amino-acid chain; its full sequence is N-(5'-phosphoribosyl)anthranilate isomerase (208 aa).

The protein belongs to the TrpF family.

It catalyses the reaction N-(5-phospho-beta-D-ribosyl)anthranilate = 1-(2-carboxyphenylamino)-1-deoxy-D-ribulose 5-phosphate. It participates in amino-acid biosynthesis; L-tryptophan biosynthesis; L-tryptophan from chorismate: step 3/5. In Staphylococcus haemolyticus (strain JCSC1435), this protein is N-(5'-phosphoribosyl)anthranilate isomerase.